A 447-amino-acid polypeptide reads, in one-letter code: Cysteine--tRNA ligase (447 aa).

C28 contacts Zn(2+). The short motif at 30–40 is the 'HIGH' region element; it reads PTVYNYIHIGN. 3 residues coordinate Zn(2+): C211, H236, and E240. A 'KMSKS' region motif is present at residues 268–272; the sequence is KMSKS. K271 provides a ligand contact to ATP.

The protein belongs to the class-I aminoacyl-tRNA synthetase family. In terms of assembly, monomer. Requires Zn(2+) as cofactor.

The protein localises to the cytoplasm. It carries out the reaction tRNA(Cys) + L-cysteine + ATP = L-cysteinyl-tRNA(Cys) + AMP + diphosphate. The polypeptide is Cysteine--tRNA ligase (Streptococcus pyogenes serotype M6 (strain ATCC BAA-946 / MGAS10394)).